Here is a 69-residue protein sequence, read N- to C-terminus: MTNNNNSNSNQLLVPGVQQAINQMKEEIANEFGVNLGPDSTSRANGSVGGEITKRLVRQAQSQMNGYTK.

The protein belongs to the alpha/beta-type SASP family.

Functionally, SASP are bound to spore DNA. They are double-stranded DNA-binding proteins that cause DNA to change to an a-like conformation. They protect the DNA backbone from chemical and enzymatic cleavage and are thus involved in dormant spore's high resistance to UV light. This is Small, acid-soluble spore protein 1 (Su-1) from Sporosarcina ureae.